Reading from the N-terminus, the 459-residue chain is Putrescine aminotransferase (459 aa).

Pyridoxal 5'-phosphate-binding positions include glycine 150–threonine 151 and glutamine 274. At lysine 300 the chain carries N6-(pyridoxal phosphate)lysine. Residue threonine 332 coordinates pyridoxal 5'-phosphate.

This sequence belongs to the class-III pyridoxal-phosphate-dependent aminotransferase family. Putrescine aminotransferase subfamily. Pyridoxal 5'-phosphate is required as a cofactor.

The enzyme catalyses an alkane-alpha,omega-diamine + 2-oxoglutarate = an omega-aminoaldehyde + L-glutamate. The catalysed reaction is putrescine + 2-oxoglutarate = 1-pyrroline + L-glutamate + H2O. It catalyses the reaction cadaverine + 2-oxoglutarate = 5-aminopentanal + L-glutamate. It participates in amine and polyamine degradation; putrescine degradation; 4-aminobutanal from putrescine (transaminase route): step 1/1. In terms of biological role, catalyzes the aminotransferase reaction from putrescine to 2-oxoglutarate, leading to glutamate and 4-aminobutanal, which spontaneously cyclizes to form 1-pyrroline. This is the first step in one of two pathways for putrescine degradation, where putrescine is converted into 4-aminobutanoate (gamma-aminobutyrate or GABA) via 4-aminobutanal. Also functions as a cadaverine transaminase in a a L-lysine degradation pathway to succinate that proceeds via cadaverine, glutarate and L-2-hydroxyglutarate. This is Putrescine aminotransferase from Klebsiella pneumoniae (strain 342).